The sequence spans 145 residues: Large ribosomal subunit protein uL11 (145 aa).

This sequence belongs to the universal ribosomal protein uL11 family. Part of the ribosomal stalk of the 50S ribosomal subunit. Interacts with L10 and the large rRNA to form the base of the stalk. L10 forms an elongated spine to which L12 dimers bind in a sequential fashion forming a multimeric L10(L12)X complex. One or more lysine residues are methylated.

Its function is as follows. Forms part of the ribosomal stalk which helps the ribosome interact with GTP-bound translation factors. The sequence is that of Large ribosomal subunit protein uL11 from Coxiella burnetii (strain CbuK_Q154) (Coxiella burnetii (strain Q154)).